A 1420-amino-acid chain; its full sequence is DNA-directed RNA polymerase subunit beta' (1420 aa).

Cysteine 71, cysteine 73, cysteine 86, and cysteine 89 together coordinate Zn(2+). Mg(2+)-binding residues include aspartate 461, aspartate 463, and aspartate 465. Positions 815, 889, 896, and 899 each coordinate Zn(2+).

Belongs to the RNA polymerase beta' chain family. The RNAP catalytic core consists of 2 alpha, 1 beta, 1 beta' and 1 omega subunit. When a sigma factor is associated with the core the holoenzyme is formed, which can initiate transcription. It depends on Mg(2+) as a cofactor. Requires Zn(2+) as cofactor.

The enzyme catalyses RNA(n) + a ribonucleoside 5'-triphosphate = RNA(n+1) + diphosphate. DNA-dependent RNA polymerase catalyzes the transcription of DNA into RNA using the four ribonucleoside triphosphates as substrates. This is DNA-directed RNA polymerase subunit beta' from Histophilus somni (strain 2336) (Haemophilus somnus).